A 183-amino-acid chain; its full sequence is MLVVLLTAALLAEHATIYEDSISQLSEEEQQGQDPGQLHQRPGQFPPQPSASDEEGDDDGEEDGNAPEGPPQQGGDHQKPRPPKPGNQQGPPQQEGQQQNRPPKPGNQEGPPQQEGQQQNRPPKPGNQEGPPQQEGQQQNRPPKPGNQEGPPQQEGQQQNRPPKPGNQEGPPQQGSEEQSTSL.

The N-terminal stretch at 1 to 14 is a signal peptide; the sequence is MLVVLLTAALLAEH. Positions 22 to 183 are disordered; it reads ISQLSEEEQQ…QGSEEQSTSL (162 aa). The segment covering 52–65 has biased composition (acidic residues); sequence SDEEGDDDGEEDGN. 5 tandem repeats follow at residues 81–100, 101–120, 121–140, 141–160, and 161–180. Over residues 86–183 the composition is skewed to low complexity; sequence GNQQGPPQQE…QGSEEQSTSL (98 aa).

The protein localises to the secreted. The sequence is that of Acidic proline-rich protein HP43A (H29) from Mesocricetus auratus (Golden hamster).